The following is a 485-amino-acid chain: Inosine-5'-monophosphate dehydrogenase (485 aa).

CBS domains lie at 99 to 154 (IVED…TVKE) and 156 to 212 (MTRE…KNAV). NAD(+) is bound by residues Asp-247 and 294-296 (GIG). Gly-296 and Gly-298 together coordinate K(+). Ser-299 contributes to the IMP binding site. Cys-301 provides a ligand contact to K(+). Cys-301 serves as the catalytic Thioimidate intermediate. Residues 334-336 (DGG), 357-358 (GN), and 381-385 (YRGMG) contribute to the IMP site. Residue Arg-397 is the Proton acceptor of the active site. Residue Glu-412 coordinates IMP. Residues Glu-466, Ser-467, and His-468 each coordinate K(+).

The protein belongs to the IMPDH/GMPR family. In terms of assembly, homotetramer. It depends on K(+) as a cofactor.

It carries out the reaction IMP + NAD(+) + H2O = XMP + NADH + H(+). It functions in the pathway purine metabolism; XMP biosynthesis via de novo pathway; XMP from IMP: step 1/1. Its activity is regulated as follows. Mycophenolic acid (MPA) is a non-competitive inhibitor that prevents formation of the closed enzyme conformation by binding to the same site as the amobile flap. In contrast, mizoribine monophosphate (MZP) is a competitive inhibitor that induces the closed conformation. MPA is a potent inhibitor of mammalian IMPDHs but a poor inhibitor of the bacterial enzymes. MZP is a more potent inhibitor of bacterial IMPDH. Functionally, catalyzes the conversion of inosine 5'-phosphate (IMP) to xanthosine 5'-phosphate (XMP), the first committed and rate-limiting step in the de novo synthesis of guanine nucleotides, and therefore plays an important role in the regulation of cell growth. The protein is Inosine-5'-monophosphate dehydrogenase of Pyrococcus furiosus (strain ATCC 43587 / DSM 3638 / JCM 8422 / Vc1).